We begin with the raw amino-acid sequence, 239 residues long: MSHVSNSTDEVVRNYLAAKSMVTSLKAFDQESSFAKEANYQVDRCIDEMTDAIDKHDVDTLCAMWESWNARVFHSLDTEGIKQAQCYEASAYRLFLVRCVQKKNISKCNEFFRKMSSLTLNNPQWADWFAFPYNHHAKDTEPFRKYFDKTWIEIYYVSLHNFLSTSLANVSPSVIGTIVEGIARDPTGNDHVDFDEDLIDDFAVIAQCSAPVKRGHSKPSLRNLLKSLTSSKKPSPSTD.

This sequence belongs to the WD repeat WDR91 family. As to quaternary structure, interacts with sorf-2; the interaction is direct. Interacts with bec-1.

It localises to the early endosome. The protein resides in the late endosome. It is found in the cytoplasm. Together with sorf-2 negatively regulates the levels of phosphatidylinositol 3-phosphate (PtdIns3P) to enable the conversion of early endosomes to late endosomes. Binds to sorf-2 and the sorf-1-sorf-2 complex likely acts through bec-1, a non-catalytic subunit of phosphatidylinositol 3-kinase (PI3K), to suppress PI3K activity, thereby negatively regulating endosomal PtdIns3P levels. This chain is Suppressor of organelle fusion 1, found in Caenorhabditis elegans.